Here is a 231-residue protein sequence, read N- to C-terminus: Ion-translocating oxidoreductase complex subunit E (231 aa).

Helical transmembrane passes span 18–38 (ALVQLLGLCPLLAVTSTATNA), 39–59 (LGLGLATTLVLTLTNLTISTL), 63–83 (TPSEIRIPIYVMIIASVVSAV), 86–106 (LINAYAFGLYQSLGIFIPLIV), 125–145 (ALSALDGFSIGMGATCAMFVL), and 182–202 (PFLLAMLPPGAFIGLGLMLAG).

It belongs to the NqrDE/RnfAE family. The complex is composed of six subunits: RsxA, RsxB, RsxC, RsxD, RsxE and RsxG.

It localises to the cell inner membrane. Functionally, part of a membrane-bound complex that couples electron transfer with translocation of ions across the membrane. Required to maintain the reduced state of SoxR. In Escherichia coli O6:K15:H31 (strain 536 / UPEC), this protein is Ion-translocating oxidoreductase complex subunit E.